Reading from the N-terminus, the 577-residue chain is Moesin (577 aa).

The FERM domain occupies proline 2 to arginine 295. At serine 74 the chain carries Phosphoserine. Lysine 79 is modified (N6-acetyllysine). Residue lysine 83 is modified to N6-succinyllysine. The [IL]-x-C-x-x-[DE] motif signature appears at isoleucine 115–glutamate 120. Position 116 is a phosphotyrosine (tyrosine 116). Cysteine 117 is modified (S-nitrosocysteine). 2 positions are modified to N6-acetyllysine: lysine 139 and lysine 165. The segment covering leucine 375–glutamate 401 has biased composition (basic and acidic residues). Disordered stretches follow at residues leucine 375 to aspartate 409 and alanine 466 to valine 518. Serine 407 is subject to Phosphoserine. The segment covering alanine 476–glycine 487 has biased composition (acidic residues). Over residues alanine 492 to valine 518 the composition is skewed to basic and acidic residues. Residue serine 527 is modified to Phosphoserine. A Phosphothreonine; by ROCK2 and STK10 modification is found at threonine 558.

As to quaternary structure, in resting T-cells, part of a PAG1-NHERF1-MSN complex which is disrupted upon TCR activation. Interacts with NHERF1. Interacts with PPP1R16B. Interacts with PDZD8. Interacts with SELPLG and SYK; these interactions mediate the activation of SYK by SELPLG. Interacts with PDPN (via cytoplasmic domain); this interaction activates RHOA and promotes epithelial-mesenchymal transition. Interacts with SPN/CD43 cytoplasmic tail. Interacts with CD44. Interacts with ICAM2. Interacts with ICAM3 (via C-terminus). Interacts with PDZD8. Interacts with F-actin. Interacts with CD46. Interacts with PTPN6. In terms of processing, phosphorylation on Thr-558 is crucial for the formation of microvilli-like structures. Phosphorylation by ROCK2 suppresses the head-to-tail association of the N-terminal and C-terminal halves resulting in an opened conformation which is capable of actin and membrane-binding. Phosphorylation on Thr-558 by STK10 negatively regulates lymphocyte migration and polarization. Post-translationally, S-nitrosylation of Cys-117 is induced by interferon-gamma and oxidatively-modified low-densitity lipoprotein (LDL(ox)) implicating the iNOS-S100A8/9 transnitrosylase complex.

The protein resides in the cell membrane. It is found in the cytoplasm. Its subcellular location is the cytoskeleton. The protein localises to the apical cell membrane. It localises to the cell projection. The protein resides in the microvillus membrane. It is found in the microvillus. A head-to-tail association, of the N-terminal and C-terminal halves results in a closed conformation (inactive form) which is incapable of actin or membrane-binding. In terms of biological role, ezrin-radixin-moesin (ERM) family protein that connects the actin cytoskeleton to the plasma membrane and thereby regulates the structure and function of specific domains of the cell cortex. Tethers actin filaments by oscillating between a resting and an activated state providing transient interactions between moesin and the actin cytoskeleton. Once phosphorylated on its C-terminal threonine, moesin is activated leading to interaction with F-actin and cytoskeletal rearrangement. These rearrangements regulate many cellular processes, including cell shape determination, membrane transport, and signal transduction. The role of moesin is particularly important in immunity acting on both T and B-cells homeostasis and self-tolerance, regulating lymphocyte egress from lymphoid organs. Modulates phagolysosomal biogenesis in macrophages. Participates also in immunologic synapse formation. This Bos taurus (Bovine) protein is Moesin.